Here is a 274-residue protein sequence, read N- to C-terminus: Nitrogenase iron protein (274 aa).

8 to 15 (GKGGIGKS) serves as a coordination point for ATP. C94 provides a ligand contact to [4Fe-4S] cluster. R97 is modified (ADP-ribosylarginine; by dinitrogenase reductase ADP-ribosyltransferase). A [4Fe-4S] cluster-binding site is contributed by C131.

The protein belongs to the NifH/BchL/ChlL family. As to quaternary structure, homodimer. [4Fe-4S] cluster is required as a cofactor. The reversible ADP-ribosylation of Arg-97 inactivates the nitrogenase reductase and regulates nitrogenase activity.

It catalyses the reaction N2 + 8 reduced [2Fe-2S]-[ferredoxin] + 16 ATP + 16 H2O = H2 + 8 oxidized [2Fe-2S]-[ferredoxin] + 2 NH4(+) + 16 ADP + 16 phosphate + 6 H(+). Its function is as follows. The key enzymatic reactions in nitrogen fixation are catalyzed by the nitrogenase complex, which has 2 components: the iron protein and the molybdenum-iron protein. The protein is Nitrogenase iron protein of Chlorobaculum parvum (strain DSM 263 / NCIMB 8327) (Chlorobium vibrioforme subsp. thiosulfatophilum).